Reading from the N-terminus, the 141-residue chain is Large ribosomal subunit protein uL11 (141 aa).

This sequence belongs to the universal ribosomal protein uL11 family. Part of the ribosomal stalk of the 50S ribosomal subunit. Interacts with L10 and the large rRNA to form the base of the stalk. L10 forms an elongated spine to which L12 dimers bind in a sequential fashion forming a multimeric L10(L12)X complex. One or more lysine residues are methylated.

In terms of biological role, forms part of the ribosomal stalk which helps the ribosome interact with GTP-bound translation factors. This chain is Large ribosomal subunit protein uL11, found in Lactobacillus acidophilus (strain ATCC 700396 / NCK56 / N2 / NCFM).